The following is a 196-amino-acid chain: UPF0056 membrane protein BU449 (196 aa).

6 helical membrane-spanning segments follow: residues 8–28 (TILL…MTIL), 45–65 (IIAL…LIIL), 71–91 (TVSI…IFPS), 105–125 (FLVP…TLML), 134–154 (MFYL…ILLS), and 174–194 (MGLV…RAWF).

The protein belongs to the UPF0056 (MarC) family.

Its subcellular location is the cell membrane. This is UPF0056 membrane protein BU449 from Buchnera aphidicola subsp. Acyrthosiphon pisum (strain APS) (Acyrthosiphon pisum symbiotic bacterium).